The primary structure comprises 124 residues: Mediator of RNA polymerase II transcription subunit 31 (124 aa).

Belongs to the Mediator complex subunit 31 family. As to quaternary structure, component of the Mediator complex.

Its subcellular location is the nucleus. Component of the Mediator complex, a coactivator involved in the regulated transcription of nearly all RNA polymerase II-dependent genes. Mediator functions as a bridge to convey information from gene-specific regulatory proteins to the basal RNA polymerase II transcription machinery. Mediator is recruited to promoters by direct interactions with regulatory proteins and serves as a scaffold for the assembly of a functional preinitiation complex with RNA polymerase II and the general transcription factors. This is Mediator of RNA polymerase II transcription subunit 31 (SOH1) from Kluyveromyces lactis (strain ATCC 8585 / CBS 2359 / DSM 70799 / NBRC 1267 / NRRL Y-1140 / WM37) (Yeast).